We begin with the raw amino-acid sequence, 1051 residues long: Outer capsid protein VP2 (1051 aa).

Belongs to the orbivirus VP2 family.

The protein resides in the virion. Functionally, the VP2 protein is one of the two proteins (with VP5) which constitute the virus particle outer capsid. It is the major target of the host immunogenic response. In African horse sickness virus (AHSV), this protein is Outer capsid protein VP2 (Segment-2).